We begin with the raw amino-acid sequence, 542 residues long: CTP synthase (542 aa).

Residues 1 to 265 are amidoligase domain; that stretch reads MTRYIFITGG…DDEVLSVFGI (265 aa). Ser-13 is a binding site for CTP. Ser-13 provides a ligand contact to UTP. ATP contacts are provided by residues 14 to 19 and Asp-71; that span reads SLGKGL. Residues Asp-71 and Glu-139 each contribute to the Mg(2+) site. Residues 146–148, 186–191, and Lys-222 each bind CTP; these read DIE and KTKPTQ. UTP contacts are provided by residues 186-191 and Lys-222; that span reads KTKPTQ. The 251-residue stretch at 291–541 folds into the Glutamine amidotransferase type-1 domain; it reads TIAIVGKYTG…VEAAVEQSRL (251 aa). Gly-353 contributes to the L-glutamine binding site. The active-site Nucleophile; for glutamine hydrolysis is the Cys-380. L-glutamine-binding positions include 381-384, Glu-404, and Arg-469; that span reads FGMQ. Residues His-514 and Glu-516 contribute to the active site.

Belongs to the CTP synthase family. In terms of assembly, homotetramer.

The enzyme catalyses UTP + L-glutamine + ATP + H2O = CTP + L-glutamate + ADP + phosphate + 2 H(+). It carries out the reaction L-glutamine + H2O = L-glutamate + NH4(+). It catalyses the reaction UTP + NH4(+) + ATP = CTP + ADP + phosphate + 2 H(+). Its pathway is pyrimidine metabolism; CTP biosynthesis via de novo pathway; CTP from UDP: step 2/2. Allosterically activated by GTP, when glutamine is the substrate; GTP has no effect on the reaction when ammonia is the substrate. The allosteric effector GTP functions by stabilizing the protein conformation that binds the tetrahedral intermediate(s) formed during glutamine hydrolysis. Inhibited by the product CTP, via allosteric rather than competitive inhibition. Catalyzes the ATP-dependent amination of UTP to CTP with either L-glutamine or ammonia as the source of nitrogen. Regulates intracellular CTP levels through interactions with the four ribonucleotide triphosphates. The sequence is that of CTP synthase from Parvibaculum lavamentivorans (strain DS-1 / DSM 13023 / NCIMB 13966).